The following is a 200-amino-acid chain: Small ribosomal subunit protein uS4 (200 aa).

The 64-residue stretch at 94-157 folds into the S4 RNA-binding domain; the sequence is SRLDNLVFRA…QTSPQVKDAV (64 aa).

The protein belongs to the universal ribosomal protein uS4 family. As to quaternary structure, part of the 30S ribosomal subunit. Contacts protein S5. The interaction surface between S4 and S5 is involved in control of translational fidelity.

Functionally, one of the primary rRNA binding proteins, it binds directly to 16S rRNA where it nucleates assembly of the body of the 30S subunit. In terms of biological role, with S5 and S12 plays an important role in translational accuracy. The protein is Small ribosomal subunit protein uS4 of Metamycoplasma arthritidis (strain 158L3-1) (Mycoplasma arthritidis).